The sequence spans 26 residues: Dermaseptin-J1 (26 aa).

V26 carries the post-translational modification Valine amide.

As to expression, expressed by the skin glands.

The protein localises to the secreted. Has antimicrobial activity. The sequence is that of Dermaseptin-J1 from Phasmahyla jandaia (Jandaia leaf frog).